The sequence spans 420 residues: Polymerase delta-interacting protein 3 (420 aa).

Position 2 is an N-acetylalanine (A2). Phosphoserine is present on S5. R33 carries the post-translational modification Omega-N-methylarginine. Residue S127 is modified to Phosphoserine. T140 is subject to Phosphothreonine. A Glycyl lysine isopeptide (Lys-Gly) (interchain with G-Cter in SUMO2) cross-link involves residue K200. A phosphoserine mark is found at S215 and S217. A Glycyl lysine isopeptide (Lys-Gly) (interchain with G-Cter in SUMO2) cross-link involves residue K223. The residue at position 244 (S244) is a Phosphoserine. A Glycyl lysine isopeptide (Lys-Gly) (interchain with G-Cter in SUMO2) cross-link involves residue K248. The segment at 256 to 277 is disordered; sequence TLVNKEEPPKELPPAEPVLSPL. S275 is subject to Phosphoserine. An RRM domain is found at 280-351; it reads TKMTVNNLHP…QPMKCNLHMN (72 aa). The disordered stretch occupies residues 369 to 394; sequence PSVKKESELPRRGNPASSNPPAEVDP. A compositionally biased stretch (basic and acidic residues) spans 370-379; the sequence is SVKKESELPR. Residue K372 forms a Glycyl lysine isopeptide (Lys-Gly) (interchain with G-Cter in SUMO2) linkage. At S385 the chain carries Phosphoserine. K417 is covalently cross-linked (Glycyl lysine isopeptide (Lys-Gly) (interchain with G-Cter in SUMO2)).

Interacts with POLD2. Interacts with NCBP1 and EIF4A3. Associates with the multiprotein exon junction complex (EJC). Interacts with RPS6KB1 (activated). Interacts with ERH. Interacts with THOC2, DDX39B and ZC3H11A; the interactions are ATP-dependent and indicative for an association with the TREX complex.

The protein localises to the nucleus. It localises to the nucleus speckle. It is found in the cytoplasm. Is involved in regulation of translation. Is preferentially associated with CBC-bound spliced mRNA-protein complexes during the pioneer round of mRNA translation. Contributes to enhanced translational efficiency of spliced over nonspliced mRNAs. Recruits activated ribosomal protein S6 kinase beta-1 I/RPS6KB1 to newly synthesized mRNA. Involved in nuclear mRNA export; probably mediated by association with the TREX complex. This chain is Polymerase delta-interacting protein 3 (Poldip3), found in Mus musculus (Mouse).